Here is a 475-residue protein sequence, read N- to C-terminus: Putative aldehyde dehydrogenase SSP0762 (475 aa).

Position 201 to 207 (201 to 207 (GDGQGVG)) interacts with NAD(+). Active-site residues include Glu-245 and Cys-279.

It belongs to the aldehyde dehydrogenase family.

It catalyses the reaction an aldehyde + NAD(+) + H2O = a carboxylate + NADH + 2 H(+). The sequence is that of Putative aldehyde dehydrogenase SSP0762 from Staphylococcus saprophyticus subsp. saprophyticus (strain ATCC 15305 / DSM 20229 / NCIMB 8711 / NCTC 7292 / S-41).